The sequence spans 422 residues: G-protein coupled receptor 83 (422 aa).

An N-terminal signal peptide occupies residues 1–16 (MGRRGALLCLLPLLRA). The Extracellular portion of the chain corresponds to 17-70 (AERPEGRADEPGLEAALAGPNASHFFWSNYSFSDWQNFVGRRRYGAESQNPTVK). Asn37 and Asn45 each carry an N-linked (GlcNAc...) asparagine glycan. The chain crosses the membrane as a helical span at residues 71-91 (ALLVVAYSFIIVFSLFGNVLV). At 92–106 (CHVIFKNQRMRSATS) the chain is on the cytoplasmic side. The helical transmembrane segment at 107–128 (LFIVNLAVADILITLLNTPFTL) threads the bilayer. The Extracellular segment spans residues 129 to 144 (VRFVNSTWVFGKGMCH). Asn133 is a glycosylation site (N-linked (GlcNAc...) asparagine). The helical transmembrane segment at 145–166 (VSRFAQYCSLHVSALTLTAIAV) threads the bilayer. Topologically, residues 167–185 (DRHQVIMHPLKPRISITKG) are cytoplasmic. A helical membrane pass occupies residues 186–207 (VIYITVIWTMATFFSLPHAICQ). Residues 208 to 237 (KLFTFKYSEDIVRSLCLPDFPEPADLFWKY) lie on the Extracellular side of the membrane. Residues 238-259 (LDLATFILLYILPLLIISVAYA) traverse the membrane as a helical segment. Residues 260 to 292 (RVAKKLWLCNTIGDVTTEQYLALRRKKKKTIKM) are Cytoplasmic-facing. A helical membrane pass occupies residues 293 to 314 (LMLVVVLFALCWFPLNCYVLLL). At 315–326 (SSKVIHTNNALY) the chain is on the extracellular side. Residues 327–347 (FAFHWFAMSSTCYNPFIYCWL) traverse the membrane as a helical segment. Topologically, residues 348–422 (NENFRIELKA…SSVEPIVAMS (75 aa)) are cytoplasmic.

This sequence belongs to the G-protein coupled receptor 1 family.

It is found in the cell membrane. Its function is as follows. G-protein coupled receptor for PEN, a neuropeptide produced from the precursor protein, proSAAS (encoded by PCSK1N). Acts through a G(i)- and G(q)-alpha-alpha-mediated pathway in response to PEN. Plays a role in food intake and body weight regulation. May contribute to the regulation of anxiety-related behaviors. This is G-protein coupled receptor 83 (GPR83) from Canis lupus familiaris (Dog).